Consider the following 229-residue polypeptide: Ras-related protein Rab-33B (229 aa).

Residues Asn-43, Val-44, Gly-45, Lys-46, Thr-47, Cys-48, Thr-62, and Thr-65 each contribute to the GTP site. Position 47 (Thr-47) interacts with Mg(2+). Residues 56–68 (GRFPDRTEATIGV) carry the Switch 1 motif. Residues Thr-65 and Asp-88 each contribute to the Mg(2+) site. The Switch 2 motif lies at 89 to 108 (TAGQERFRKSMVQHYYRNVH). The GTP site is built by Gly-91, Asn-148, Lys-149, Asp-151, Ala-179, and Lys-180. 2 S-geranylgeranyl cysteine lipidation sites follow: Cys-227 and Cys-229. Cys-229 carries the post-translational modification Cysteine methyl ester.

Belongs to the small GTPase superfamily. Rab family. As to quaternary structure, interacts (GTP- and GDP-bound forms) with ATG16L1; the complex consists of a tetramer where two RAB33B molecules bind independently one molecule of the ATG16L1 homodimer; the interaction promotes ATG12-ATG5-ATG16L1 complex recruitment to phagophores. Interacts with ATG16L2; however interaction is approximately hundred times lower than for ATG16L1. Interacts with RIC1 (via C-terminus domain); the interaction is direct with a preference for RAB33B-GTP. Interacts with RGP1. The cofactor is Mg(2+). Prenylated. Ubiquitous.

The protein localises to the golgi apparatus membrane. The protein resides in the golgi apparatus. It localises to the cis-Golgi network. Its subcellular location is the preautophagosomal structure membrane. The catalysed reaction is GTP + H2O = GDP + phosphate + H(+). Regulated by guanine nucleotide exchange factors (GEFs) which promote the exchange of bound GDP for free GTP. Regulated by GTPase activating proteins (GAPs) such as SGSM2 which increase the GTP hydrolysis activity. Inhibited by GDP dissociation inhibitors (GDIs). In terms of biological role, the small GTPases Rab are key regulators of intracellular membrane trafficking, from the formation of transport vesicles to their fusion with membranes. Rabs cycle between an inactive GDP-bound form and an active GTP-bound form that is able to recruit to membranes different sets of downstream effectors directly responsible for vesicle formation, movement, tethering and fusion. RAB33B acts, in coordination with RAB6A, to regulate intra-Golgi retrograde trafficking. Participates in autophagosome formation by recruiting the ATG12-ATG5-ATG16L1 complex to phagophores, probably in a nucleotide-independent manner. This chain is Ras-related protein Rab-33B, found in Mus musculus (Mouse).